A 241-amino-acid polypeptide reads, in one-letter code: Outer membrane protein A (241 aa).

5 consecutive transmembrane segments (beta stranded) span residues 1-8 (LTAKLSYP), 13-21 (LDIYTRLGG), 46-55 (PVFAGGVEYA), 60-67 (IATRLEYQ), and 86-94 (MLSVGVSYR). 4 repeat units span residues 105–106 (AP), 107–108 (AP), 109–110 (AP), and 111–112 (AP). The segment at 105 to 112 (APAPAPAP) is 4 X 2 AA tandem repeats of A-P. In terms of domain architecture, OmpA-like spans 114–241 (VQTKHFTLKS…RRVEIEVKGV (128 aa)). Cys215 and Cys227 are joined by a disulfide.

Belongs to the outer membrane OOP (TC 1.B.6) superfamily. OmpA family. Monomer and homodimer.

It localises to the cell outer membrane. Functionally, with TolR probably plays a role in maintaining the position of the peptidoglycan cell wall in the periplasm. Acts as a porin with low permeability that allows slow penetration of small solutes; an internal gate slows down solute passage. The protein is Outer membrane protein A of Shimwellia blattae (Escherichia blattae).